A 200-amino-acid polypeptide reads, in one-letter code: Small ribosomal subunit protein eS1 (200 aa).

Belongs to the eukaryotic ribosomal protein eS1 family.

This chain is Small ribosomal subunit protein eS1, found in Thermococcus gammatolerans (strain DSM 15229 / JCM 11827 / EJ3).